The chain runs to 123 residues: Large ribosomal subunit protein bL12 (123 aa).

It belongs to the bacterial ribosomal protein bL12 family. Homodimer. Part of the ribosomal stalk of the 50S ribosomal subunit. Forms a multimeric L10(L12)X complex, where L10 forms an elongated spine to which 2 to 4 L12 dimers bind in a sequential fashion. Binds GTP-bound translation factors.

Functionally, forms part of the ribosomal stalk which helps the ribosome interact with GTP-bound translation factors. Is thus essential for accurate translation. The protein is Large ribosomal subunit protein bL12 of Haemophilus influenzae (strain 86-028NP).